The sequence spans 287 residues: Elongation factor Ts (287 aa).

The involved in Mg(2+) ion dislocation from EF-Tu stretch occupies residues 80 to 83 (TDFL).

It belongs to the EF-Ts family.

It localises to the cytoplasm. Associates with the EF-Tu.GDP complex and induces the exchange of GDP to GTP. It remains bound to the aminoacyl-tRNA.EF-Tu.GTP complex up to the GTP hydrolysis stage on the ribosome. The sequence is that of Elongation factor Ts from Pseudomonas fluorescens (strain Pf0-1).